Here is a 255-residue protein sequence, read N- to C-terminus: MLKIGPYEMESRLLLGTGKFDNEEIQTKAIEASGTDVLTFAVRRMNLYDKNLPNPLANVNLKDFVTFPNTAGAKTVDEAIRIAEIAKHAGVCDMIKVEIIGDDETLLPDPIATYEACEILLERGYIVCPYIAEDVVLAKRLEELGVHAVMPLASPIGTGRGINNPLNLSYIVKNANVPIIVDAGIGSAKDAAEAMELGADAVLLNSAVSRAKDPVKMAEAMKLGIEAGRLSYEAGRIPVKYTAQASSPSEGLGFL.

The active-site Schiff-base intermediate with DXP is the K96. Residues G157, 183-184 (AG), and 205-206 (NS) contribute to the 1-deoxy-D-xylulose 5-phosphate site.

This sequence belongs to the ThiG family. In terms of assembly, homotetramer. Forms heterodimers with either ThiH or ThiS.

The protein resides in the cytoplasm. The catalysed reaction is [ThiS sulfur-carrier protein]-C-terminal-Gly-aminoethanethioate + 2-iminoacetate + 1-deoxy-D-xylulose 5-phosphate = [ThiS sulfur-carrier protein]-C-terminal Gly-Gly + 2-[(2R,5Z)-2-carboxy-4-methylthiazol-5(2H)-ylidene]ethyl phosphate + 2 H2O + H(+). Its pathway is cofactor biosynthesis; thiamine diphosphate biosynthesis. Functionally, catalyzes the rearrangement of 1-deoxy-D-xylulose 5-phosphate (DXP) to produce the thiazole phosphate moiety of thiamine. Sulfur is provided by the thiocarboxylate moiety of the carrier protein ThiS. In vitro, sulfur can be provided by H(2)S. This chain is Thiazole synthase, found in Staphylococcus carnosus (strain TM300).